The following is a 380-amino-acid chain: Erythronate-4-phosphate dehydrogenase (380 aa).

2 residues coordinate substrate: Ser45 and Thr66. The NAD(+) site is built by Asp146 and Thr174. Residue Arg207 is part of the active site. Asp231 contacts NAD(+). Glu236 is a catalytic residue. The active-site Proton donor is His253. Gly256 contributes to the NAD(+) binding site. Residue Tyr257 participates in substrate binding.

Belongs to the D-isomer specific 2-hydroxyacid dehydrogenase family. PdxB subfamily. Homodimer.

Its subcellular location is the cytoplasm. The enzyme catalyses 4-phospho-D-erythronate + NAD(+) = (R)-3-hydroxy-2-oxo-4-phosphooxybutanoate + NADH + H(+). Its pathway is cofactor biosynthesis; pyridoxine 5'-phosphate biosynthesis; pyridoxine 5'-phosphate from D-erythrose 4-phosphate: step 2/5. Its function is as follows. Catalyzes the oxidation of erythronate-4-phosphate to 3-hydroxy-2-oxo-4-phosphonooxybutanoate. In Pseudomonas fluorescens (strain Pf0-1), this protein is Erythronate-4-phosphate dehydrogenase.